The following is a 406-amino-acid chain: 4-hydroxy-3-methylbut-2-en-1-yl diphosphate synthase (ferredoxin) (406 aa).

Residues Cys-313, Cys-316, Cys-347, and Glu-354 each coordinate [4Fe-4S] cluster.

The protein belongs to the IspG family. [4Fe-4S] cluster is required as a cofactor.

It carries out the reaction (2E)-4-hydroxy-3-methylbut-2-enyl diphosphate + 2 oxidized [2Fe-2S]-[ferredoxin] + H2O = 2-C-methyl-D-erythritol 2,4-cyclic diphosphate + 2 reduced [2Fe-2S]-[ferredoxin] + H(+). Its pathway is isoprenoid biosynthesis; isopentenyl diphosphate biosynthesis via DXP pathway; isopentenyl diphosphate from 1-deoxy-D-xylulose 5-phosphate: step 5/6. In terms of biological role, converts 2C-methyl-D-erythritol 2,4-cyclodiphosphate (ME-2,4cPP) into 1-hydroxy-2-methyl-2-(E)-butenyl 4-diphosphate. The polypeptide is 4-hydroxy-3-methylbut-2-en-1-yl diphosphate synthase (ferredoxin) (Picosynechococcus sp. (strain ATCC 27264 / PCC 7002 / PR-6) (Agmenellum quadruplicatum)).